The chain runs to 208 residues: Small ribosomal subunit protein eS1 (208 aa).

The protein belongs to the eukaryotic ribosomal protein eS1 family.

The chain is Small ribosomal subunit protein eS1 from Saccharolobus islandicus (strain Y.N.15.51 / Yellowstone #2) (Sulfolobus islandicus).